The following is a 566-amino-acid chain: Proline--tRNA ligase (566 aa).

Belongs to the class-II aminoacyl-tRNA synthetase family. ProS type 1 subfamily. Homodimer.

The protein localises to the cytoplasm. It catalyses the reaction tRNA(Pro) + L-proline + ATP = L-prolyl-tRNA(Pro) + AMP + diphosphate. Its function is as follows. Catalyzes the attachment of proline to tRNA(Pro) in a two-step reaction: proline is first activated by ATP to form Pro-AMP and then transferred to the acceptor end of tRNA(Pro). As ProRS can inadvertently accommodate and process non-cognate amino acids such as alanine and cysteine, to avoid such errors it has two additional distinct editing activities against alanine. One activity is designated as 'pretransfer' editing and involves the tRNA(Pro)-independent hydrolysis of activated Ala-AMP. The other activity is designated 'posttransfer' editing and involves deacylation of mischarged Ala-tRNA(Pro). The misacylated Cys-tRNA(Pro) is not edited by ProRS. The sequence is that of Proline--tRNA ligase from Staphylococcus haemolyticus (strain JCSC1435).